Reading from the N-terminus, the 204-residue chain is Urease accessory protein UreG (204 aa).

Glycine 12–threonine 19 provides a ligand contact to GTP.

It belongs to the SIMIBI class G3E GTPase family. UreG subfamily. As to quaternary structure, homodimer. UreD, UreF and UreG form a complex that acts as a GTP-hydrolysis-dependent molecular chaperone, activating the urease apoprotein by helping to assemble the nickel containing metallocenter of UreC. The UreE protein probably delivers the nickel.

It localises to the cytoplasm. Its function is as follows. Facilitates the functional incorporation of the urease nickel metallocenter. This process requires GTP hydrolysis, probably effectuated by UreG. The protein is Urease accessory protein UreG of Pseudomonas fluorescens (strain ATCC BAA-477 / NRRL B-23932 / Pf-5).